Here is a 375-residue protein sequence, read N- to C-terminus: Lipid-A-disaccharide synthase (375 aa).

Belongs to the LpxB family.

It carries out the reaction a lipid X + a UDP-2-N,3-O-bis[(3R)-3-hydroxyacyl]-alpha-D-glucosamine = a lipid A disaccharide + UDP + H(+). Its pathway is bacterial outer membrane biogenesis; LPS lipid A biosynthesis. Condensation of UDP-2,3-diacylglucosamine and 2,3-diacylglucosamine-1-phosphate to form lipid A disaccharide, a precursor of lipid A, a phosphorylated glycolipid that anchors the lipopolysaccharide to the outer membrane of the cell. This is Lipid-A-disaccharide synthase from Pseudomonas putida (strain GB-1).